A 101-amino-acid polypeptide reads, in one-letter code: Interleukin-8 (101 aa).

A signal peptide spans 1-22 (MNSKLAVALLATFLLSLTLCEA). Arg-27 is modified (citrulline). 2 cysteine pairs are disulfide-bonded: Cys-34–Cys-61 and Cys-36–Cys-77.

The protein belongs to the intercrine alpha (chemokine CxC) family. Homodimer. Interacts with TNFAIP6 (via Link domain); this interaction interferes with chemokine binding to glycosaminoglycans. Post-translationally, citrullination at Arg-27 prevents proteolysis, and dampens tissue inflammation, it also enhances leukocytosis, possibly through impaired chemokine clearance from the blood circulation.

The protein resides in the secreted. Functionally, chemotactic factor that mediates inflammatory response by attracting neutrophils, basophils, and T-cells to clear pathogens and protect the host from infection. Also plays an important role in neutrophil activation. Released in response to an inflammatory stimulus, exerts its effect by binding to the G-protein-coupled receptors CXCR1 and CXCR2, primarily found in neutrophils, monocytes and endothelial cells. G-protein heterotrimer (alpha, beta, gamma subunits) constitutively binds to CXCR1/CXCR2 receptor and activation by IL8 leads to beta and gamma subunits release from Galpha (GNAI2 in neutrophils) and activation of several downstream signaling pathways including PI3K and MAPK pathways. The sequence is that of Interleukin-8 (CXCL8) from Oryctolagus cuniculus (Rabbit).